A 317-amino-acid polypeptide reads, in one-letter code: MQILLANPRGFCAGVDRAISIVERAIEMYGAPIYVRHEVVHNRYVVESLCERGAIFIEEISEVPDGSILIFSAHGVSQAVRAEARSRNLTMLFDATCPLVTKVHMEVARASRKGKEAILIGHAGHPEVEGTMGQYSNPNGGMYLVESPDDVWQLNVKDENNLCFMTQTTLSVDDTSAVIDALNTRFPKIVGPRKDDICYATTNRQEAVRNLANDADIVLVVGSKNSSNSNRLAELVQRMGKPAYLIDSAADIQEFWLQGAKCIGVTAGASAPDILVQQVIARLKDLGAGESIELSGREENIVFEVPKELRVEVKQID.

Residue cysteine 12 participates in [4Fe-4S] cluster binding. Residues histidine 41 and histidine 74 each coordinate (2E)-4-hydroxy-3-methylbut-2-enyl diphosphate. 2 residues coordinate dimethylallyl diphosphate: histidine 41 and histidine 74. Isopentenyl diphosphate-binding residues include histidine 41 and histidine 74. Position 97 (cysteine 97) interacts with [4Fe-4S] cluster. Histidine 125 contributes to the (2E)-4-hydroxy-3-methylbut-2-enyl diphosphate binding site. Histidine 125 is a dimethylallyl diphosphate binding site. An isopentenyl diphosphate-binding site is contributed by histidine 125. The active-site Proton donor is glutamate 127. Threonine 168 serves as a coordination point for (2E)-4-hydroxy-3-methylbut-2-enyl diphosphate. Cysteine 198 lines the [4Fe-4S] cluster pocket. 4 residues coordinate (2E)-4-hydroxy-3-methylbut-2-enyl diphosphate: serine 226, serine 227, asparagine 228, and serine 270. Dimethylallyl diphosphate-binding residues include serine 226, serine 227, asparagine 228, and serine 270. Positions 226, 227, 228, and 270 each coordinate isopentenyl diphosphate.

It belongs to the IspH family. Homodimer. [4Fe-4S] cluster is required as a cofactor.

It carries out the reaction isopentenyl diphosphate + 2 oxidized [2Fe-2S]-[ferredoxin] + H2O = (2E)-4-hydroxy-3-methylbut-2-enyl diphosphate + 2 reduced [2Fe-2S]-[ferredoxin] + 2 H(+). It catalyses the reaction dimethylallyl diphosphate + 2 oxidized [2Fe-2S]-[ferredoxin] + H2O = (2E)-4-hydroxy-3-methylbut-2-enyl diphosphate + 2 reduced [2Fe-2S]-[ferredoxin] + 2 H(+). The protein operates within isoprenoid biosynthesis; dimethylallyl diphosphate biosynthesis; dimethylallyl diphosphate from (2E)-4-hydroxy-3-methylbutenyl diphosphate: step 1/1. It participates in isoprenoid biosynthesis; isopentenyl diphosphate biosynthesis via DXP pathway; isopentenyl diphosphate from 1-deoxy-D-xylulose 5-phosphate: step 6/6. Its function is as follows. Catalyzes the conversion of 1-hydroxy-2-methyl-2-(E)-butenyl 4-diphosphate (HMBPP) into a mixture of isopentenyl diphosphate (IPP) and dimethylallyl diphosphate (DMAPP). Acts in the terminal step of the DOXP/MEP pathway for isoprenoid precursor biosynthesis. This is 4-hydroxy-3-methylbut-2-enyl diphosphate reductase from Yersinia pestis bv. Antiqua (strain Antiqua).